Consider the following 208-residue polypeptide: MARYIGPTCKLARREGADLSLKSPARALDSKCKLEQKPGQHGASRKGKLSDYATQLREKQKVKRIYGLLERQFRNYYKKASTKKGNTGENLLQLLETRLDNVCYRMGFAVTRPAARQLVSHRCVLVNGKSVNLASYQIKAGDAITLSEKAQKQLRVQEALTVAEQHDMTPSWVEVDSKKFSGVFKAVPDRADLPSDINEALIVELYSK.

Residues threonine 97–leucine 160 form the S4 RNA-binding domain.

This sequence belongs to the universal ribosomal protein uS4 family. In terms of assembly, part of the 30S ribosomal subunit. Contacts protein S5. The interaction surface between S4 and S5 is involved in control of translational fidelity.

One of the primary rRNA binding proteins, it binds directly to 16S rRNA where it nucleates assembly of the body of the 30S subunit. Functionally, with S5 and S12 plays an important role in translational accuracy. The polypeptide is Small ribosomal subunit protein uS4 (Xanthomonas oryzae pv. oryzae (strain MAFF 311018)).